The sequence spans 181 residues: NADH-quinone oxidoreductase subunit I 2 (181 aa).

2 consecutive 4Fe-4S ferredoxin-type domains span residues 44–74 (LNRY…VEGA) and 90–119 (RVYQ…MTND). Positions 54, 57, 60, 64, 99, 102, 105, and 109 each coordinate [4Fe-4S] cluster.

The protein belongs to the complex I 23 kDa subunit family. As to quaternary structure, NDH-1 is composed of 14 different subunits. Subunits NuoA, H, J, K, L, M, N constitute the membrane sector of the complex. The cofactor is [4Fe-4S] cluster.

The protein resides in the cell membrane. The catalysed reaction is a quinone + NADH + 5 H(+)(in) = a quinol + NAD(+) + 4 H(+)(out). Functionally, NDH-1 shuttles electrons from NADH, via FMN and iron-sulfur (Fe-S) centers, to quinones in the respiratory chain. The immediate electron acceptor for the enzyme in this species is believed to be menaquinone. Couples the redox reaction to proton translocation (for every two electrons transferred, four hydrogen ions are translocated across the cytoplasmic membrane), and thus conserves the redox energy in a proton gradient. This chain is NADH-quinone oxidoreductase subunit I 2, found in Mycolicibacterium paratuberculosis (strain ATCC BAA-968 / K-10) (Mycobacterium paratuberculosis).